A 784-amino-acid polypeptide reads, in one-letter code: MTSVNLSRAPAAIIRRRLQLQPEFHAECSWLKSSSKHAPFTLSCQIRPKQLSQIAELRVTSLDASQASEKDISLVQTPHKVEVNEKIEESIEYVQNLLMTSGDGRISVSPYDTAVIALIKDLKGRDAPQFPSCLEWIAHHQLADGSWGDEFFCIYDRILNTLACVVALKSWNLQSDIIEKGVTYIKENVHKLKGANVEHRTAGFELVVPTFMQMATDLGIQGLPYDHPLIKEIADTKQQRLKEIPKDLVYQMPTNLLYSLEGLGDLEWERLLKLQSGNGSFLTSPSSTAAVLMHTKDEKCLKYIENALKNCDGGAPHTYPVDIFSRLWAIDRLQRLGISRFFQHEIKYFLDHIESVWEETGVFSGRYTKFSDIDDTSMGVRLLKMHGYDVDPNVLKHFKQQDGKFSCYIGQSVESASPMYNLYRAAQLRFPGEEVLEEATKFAFNFLQEMLVKDRLQERWVISDHLFDEIKLGLKMPWYATLPRVEAAYYLDHYAGSGDVWIGKSFYRMPEISNDTYKELAILDFNRCQTQHQLEWIQMQEWYDRCSLSEFGISKRELLRSYFLAAATIFEPERTQERLLWAKTRILSKMITSFVNISGTTLSLDYNFNGLDEIISANEDQGLAGTLLATFHQLLDGFDIYTLHQLKHVWSQWFMKVQQGEGSGGEDAVLLANTLNICAGLNEDVLSNNEYTALSTLTNKICNRLAQIQDNKILQVVDGSIKDKELEQDMQALVKLVLQENGGAVDRNIRHTFLSVSKTFYYDAYHDDETTDLHIFKVLFRPVV.

Arg-240 provides a ligand contact to substrate. Residues Asp-372 and Asp-374 each coordinate Mg(2+). The DXDD motif signature appears at 372–375 (DIDD). Arg-459 provides a ligand contact to substrate.

This sequence belongs to the terpene synthase family.

The protein localises to the plastid. It localises to the chloroplast. It catalyses the reaction (2E,6E,10E)-geranylgeranyl diphosphate + H2O = 8-hydroxycopalyl diphosphate. Its pathway is secondary metabolite biosynthesis; terpenoid biosynthesis. Its function is as follows. Involved in the biosynthesis of labdane-type diterpenoid including sclareol, a diterpene-diol that is used as fragrance and flavoring, and has anticancer effects (able to kill leukemic and colon cancer cells by apoptosis). Sclareol can also be used as synthesis precursor of ambergris substitution fragance products such as ambrox. Terpene synthase that produces 8-hydroxycopalyl diphosphate from geranylgeranyl diphosphate (GGPP). This chain is Copal-8-ol diphosphate hydratase TPSSA9, chloroplastic, found in Salvia sclarea (Clary sage).